A 189-amino-acid polypeptide reads, in one-letter code: uncharacterized protein (189 aa).

The HTH tetR-type domain occupies 9–69 (ADTGGRILRA…SMLTSHIAAV (61 aa)). Residues 32–51 (TLAEIARRAGVSRPTVYRRW) constitute a DNA-binding region (H-T-H motif).

This is an uncharacterized protein from Mycobacterium bovis (strain ATCC BAA-935 / AF2122/97).